The primary structure comprises 213 residues: General transcription factor 3C polypeptide 6 (213 aa).

Residues 1-11 (MAAAADERSPE) show a composition bias toward basic and acidic residues. Disordered regions lie at residues 1–20 (MAAAADERSPEDGEDEEEEE) and 191–213 (SGPLIDIPSETEGSVFMETQMLP). Residue A2 is modified to N-acetylalanine. Position 9 is a phosphoserine (S9).

It belongs to the TFIIIC subunit 6 family. Part of the TFIIIC subcomplex TFIIIC2, consisting of six subunits, GTF3C1, GTF3C2, GTF3C3, GTF3C4, GTF3C5 and GTF3C6. Interacts with GTF3C4 and GTF3C5.

Its subcellular location is the nucleus. Its function is as follows. Involved in RNA polymerase III-mediated transcription. Integral, tightly associated component of the DNA-binding TFIIIC2 subcomplex that directly binds tRNA and virus-associated RNA promoters. The chain is General transcription factor 3C polypeptide 6 (GTF3C6) from Homo sapiens (Human).